Consider the following 489-residue polypeptide: Lysine--tRNA ligase (489 aa).

Glu-399 and Glu-406 together coordinate Mg(2+).

This sequence belongs to the class-II aminoacyl-tRNA synthetase family. Homodimer. The cofactor is Mg(2+).

Its subcellular location is the cytoplasm. The catalysed reaction is tRNA(Lys) + L-lysine + ATP = L-lysyl-tRNA(Lys) + AMP + diphosphate. The protein is Lysine--tRNA ligase of Roseiflexus castenholzii (strain DSM 13941 / HLO8).